A 446-amino-acid chain; its full sequence is Tektin-4 (446 aa).

Coiled-coil stretches lie at residues 182 to 215 (IRNV…MDYS), 297 to 346 (DAIA…NDKS), and 378 to 422 (SEVG…ANSI).

This sequence belongs to the tektin family.

The protein resides in the cytoplasm. The protein localises to the cytoskeleton. Its subcellular location is the cilium axoneme. It is found in the cell projection. It localises to the cilium. The protein resides in the flagellum. Its function is as follows. Microtubule inner protein (MIP) part of the dynein-decorated doublet microtubules (DMTs) in cilia and flagellar axoneme. Forms filamentous polymers in the walls of ciliary and flagellar microtubules. Contributes to normal sperm motility. In Xenopus laevis (African clawed frog), this protein is Tektin-4 (tekt4).